The following is a 177-amino-acid chain: Translation initiation factor IF-3 (177 aa).

The protein belongs to the IF-3 family. Monomer.

The protein localises to the cytoplasm. Its function is as follows. IF-3 binds to the 30S ribosomal subunit and shifts the equilibrium between 70S ribosomes and their 50S and 30S subunits in favor of the free subunits, thus enhancing the availability of 30S subunits on which protein synthesis initiation begins. The chain is Translation initiation factor IF-3 from Synechocystis sp. (strain ATCC 27184 / PCC 6803 / Kazusa).